Consider the following 89-residue polypeptide: Small ribosomal subunit protein uS15 (89 aa).

The segment covering 1 to 21 has biased composition (basic and acidic residues); it reads MALSKEQKTETLKEFGLHETD. The disordered stretch occupies residues 1–22; sequence MALSKEQKTETLKEFGLHETDT.

The protein belongs to the universal ribosomal protein uS15 family. As to quaternary structure, part of the 30S ribosomal subunit. Forms a bridge to the 50S subunit in the 70S ribosome, contacting the 23S rRNA.

In terms of biological role, one of the primary rRNA binding proteins, it binds directly to 16S rRNA where it helps nucleate assembly of the platform of the 30S subunit by binding and bridging several RNA helices of the 16S rRNA. Its function is as follows. Forms an intersubunit bridge (bridge B4) with the 23S rRNA of the 50S subunit in the ribosome. The chain is Small ribosomal subunit protein uS15 from Corynebacterium jeikeium (strain K411).